The primary structure comprises 189 residues: GTP cyclohydrolase 1 (189 aa).

Zn(2+)-binding residues include cysteine 78, histidine 81, and cysteine 150.

It belongs to the GTP cyclohydrolase I family. Homomer.

The catalysed reaction is GTP + H2O = 7,8-dihydroneopterin 3'-triphosphate + formate + H(+). The protein operates within cofactor biosynthesis; 7,8-dihydroneopterin triphosphate biosynthesis; 7,8-dihydroneopterin triphosphate from GTP: step 1/1. This Listeria monocytogenes serotype 4b (strain CLIP80459) protein is GTP cyclohydrolase 1.